The chain runs to 60 residues: Large ribosomal subunit protein bL32 (60 aa).

The segment covering 1-23 (MAKHPVPKKKTSKSKRDMRRSHH) has biased composition (basic residues). Positions 1–26 (MAKHPVPKKKTSKSKRDMRRSHHALT) are disordered.

This sequence belongs to the bacterial ribosomal protein bL32 family.

This is Large ribosomal subunit protein bL32 from Deinococcus deserti (strain DSM 17065 / CIP 109153 / LMG 22923 / VCD115).